Reading from the N-terminus, the 457-residue chain is Mesentericin Y105 secretion protein MesE (457 aa).

The chain crosses the membrane as a helical span at residues 22–42 (TLIIVPIFLLVVFIVLFSLFA).

Belongs to the membrane fusion protein (MFP) (TC 8.A.1) family.

Its subcellular location is the membrane. Its function is as follows. Involved in the secretion of mesentericin Y105. The polypeptide is Mesentericin Y105 secretion protein MesE (mesE) (Leuconostoc mesenteroides).